The chain runs to 446 residues: Methionine aminopeptidase 2-3 (446 aa).

The disordered stretch occupies residues I14–E116. The span at A61 to P76 shows a compositional bias: basic residues. Residues P86–Y96 show a composition bias toward polar residues. Residues K98–E116 show a composition bias toward basic and acidic residues. H199 is a binding site for substrate. A divalent metal cation contacts are provided by D219, D230, and H299. Substrate is bound at residue H307. A divalent metal cation-binding residues include E332 and E427.

It belongs to the peptidase M24A family. Methionine aminopeptidase eukaryotic type 2 subfamily. Co(2+) serves as cofactor. It depends on Zn(2+) as a cofactor. Requires Mn(2+) as cofactor. The cofactor is Fe(2+).

Its subcellular location is the cytoplasm. The catalysed reaction is Release of N-terminal amino acids, preferentially methionine, from peptides and arylamides.. Cotranslationally removes the N-terminal methionine from nascent proteins. The N-terminal methionine is often cleaved when the second residue in the primary sequence is small and uncharged (Met-Ala-, Cys, Gly, Pro, Ser, Thr, or Val). The protein is Methionine aminopeptidase 2-3 of Aspergillus fumigatus (strain CBS 144.89 / FGSC A1163 / CEA10) (Neosartorya fumigata).